Reading from the N-terminus, the 191-residue chain is Transcription factor E (191 aa).

The 84-residue stretch at 4 to 87 folds into the HTH TFE/IIEalpha-type domain; the sequence is RNKELLEIGR…YWHIETKRLP (84 aa). The disordered stretch occupies residues 170–191; that stretch reads APPKKEKKGKKSKKRSKKSKKK. Residues 174 to 191 are compositionally biased toward basic residues; it reads KEKKGKKSKKRSKKSKKK.

Belongs to the TFE family. In terms of assembly, monomer. Interaction with RNA polymerase subunits RpoF and RpoE is necessary for Tfe stimulatory transcription activity. Able to interact with Tbp and RNA polymerase in the absence of DNA promoter. Interacts both with the preinitiation and elongation complexes.

Its function is as follows. Transcription factor that plays a role in the activation of archaeal genes transcribed by RNA polymerase. Facilitates transcription initiation by enhancing TATA-box recognition by TATA-box-binding protein (Tbp), and transcription factor B (Tfb) and RNA polymerase recruitment. Not absolutely required for transcription in vitro, but particularly important in cases where Tbp or Tfb function is not optimal. It dynamically alters the nucleic acid-binding properties of RNA polymerases by stabilizing the initiation complex and destabilizing elongation complexes. Seems to translocate with the RNA polymerase following initiation and acts by binding to the non template strand of the transcription bubble in elongation complexes. The polypeptide is Transcription factor E (Pyrococcus horikoshii (strain ATCC 700860 / DSM 12428 / JCM 9974 / NBRC 100139 / OT-3)).